The chain runs to 896 residues: DNA mismatch repair protein MutS (896 aa).

Position 599-606 (599-606 (GPNMAGKS)) interacts with ATP.

Belongs to the DNA mismatch repair MutS family.

Its function is as follows. This protein is involved in the repair of mismatches in DNA. It is possible that it carries out the mismatch recognition step. This protein has a weak ATPase activity. The chain is DNA mismatch repair protein MutS from Geobacillus kaustophilus (strain HTA426).